The following is a 388-amino-acid chain: Succinate--CoA ligase [ADP-forming] subunit beta (388 aa).

Residues 9-245 form the ATP-grasp domain; sequence KELLASYGLP…KSQENERELK (237 aa). Residues K46, 53–55, E100, Y103, and E108 each bind ATP; that span reads GRG. Mg(2+) is bound by residues N200 and D214. Substrate contacts are provided by residues N265 and 322-324; that span reads GIV.

Belongs to the succinate/malate CoA ligase beta subunit family. As to quaternary structure, heterotetramer of two alpha and two beta subunits. The cofactor is Mg(2+).

It catalyses the reaction succinate + ATP + CoA = succinyl-CoA + ADP + phosphate. The catalysed reaction is GTP + succinate + CoA = succinyl-CoA + GDP + phosphate. Its pathway is carbohydrate metabolism; tricarboxylic acid cycle; succinate from succinyl-CoA (ligase route): step 1/1. Its function is as follows. Succinyl-CoA synthetase functions in the citric acid cycle (TCA), coupling the hydrolysis of succinyl-CoA to the synthesis of either ATP or GTP and thus represents the only step of substrate-level phosphorylation in the TCA. The beta subunit provides nucleotide specificity of the enzyme and binds the substrate succinate, while the binding sites for coenzyme A and phosphate are found in the alpha subunit. The chain is Succinate--CoA ligase [ADP-forming] subunit beta from Neisseria meningitidis serogroup B (strain ATCC BAA-335 / MC58).